A 60-amino-acid polypeptide reads, in one-letter code: Pepsin A (60 aa).

The propeptide at 1-45 is activation peptide; sequence FIIKVPLVKKKSLRKNLKEHGLLKDFLKKHSPNPASKYFPQEAAV.

It belongs to the peptidase A1 family.

The protein localises to the secreted. It catalyses the reaction Preferential cleavage: hydrophobic, preferably aromatic, residues in P1 and P1' positions. Cleaves 1-Phe-|-Val-2, 4-Gln-|-His-5, 13-Glu-|-Ala-14, 14-Ala-|-Leu-15, 15-Leu-|-Tyr-16, 16-Tyr-|-Leu-17, 23-Gly-|-Phe-24, 24-Phe-|-Phe-25 and 25-Phe-|-Tyr-26 bonds in the B chain of insulin.. Shows particularly broad specificity; although bonds involving phenylalanine and leucine are preferred, many others are also cleaved to some extent. This Ursus thibetanus (Asiatic black bear) protein is Pepsin A (PGA).